Consider the following 171-residue polypeptide: MGEGREGYEILLDCFLKALPSEVVAGAVKRGSVVYFRVVHGKAVLMSRKIAVVGRVQGVVHGDKFTDIVLGDGNGTVTVRFWSEKKGLLEDKGLAEGSTAKVLGVLRESREGTVYVTPIAVQSVPDGYLEEFTARIREDRDFLATFIEKQRSTVDAEEAKPPIGRDFSEKR.

This is an uncharacterized protein from Thermofilum pendens.